Here is a 427-residue protein sequence, read N- to C-terminus: MAIYAVVGTQWGDEGKGKIIDFLSSKIDYVVRFNGGNNAGHTIVVNDKKFIFNLLPSGVLQGAKCILGPSVVIDPLILIQELEVLKNNNIKTEIFISDKAHIIMPYHIKFDELSEQKKGIHKIGTTKKGIGPCYADKINRIGIRTIDLLNTEIFANKLKTNLEEKNQIIEKIYNDKPLDYDDILNTYKKYIEILKSLITNTEKILHHAINSEKHILIEGAQGTMLDIEHGTFPFVTSSNTLITAAAGCGIPISKIKQKIGIIKAFSSRVGSGPFVTEISNSIGDIIREKGQEYGSTTKRPRRIGWLDLLTIKKAIALNELNHLALTKLDILNNIESLKICTAYEFQGKIYDYIPTSCETIEKVRPIYKVFKGFKEDISNIKNYDDLPIEAREYIEFIEKEVGIQISILSVGSEREKTIFRNQEWSNI.

GTP-binding positions include 12-18 and 40-42; these read GDEGKGK and GHT. The active-site Proton acceptor is the aspartate 13. Positions 13 and 40 each coordinate Mg(2+). IMP-binding positions include 13-16, 38-41, threonine 126, arginine 140, glutamine 221, threonine 236, and arginine 299; these read DEGK and NAGH. Catalysis depends on histidine 41, which acts as the Proton donor. 295-301 contributes to the substrate binding site; that stretch reads STTKRPR. Residues arginine 301, 327-329, and 409-411 contribute to the GTP site; these read KLD and SVG.

It belongs to the adenylosuccinate synthetase family. In terms of assembly, homodimer. The cofactor is Mg(2+).

Its subcellular location is the cytoplasm. The enzyme catalyses IMP + L-aspartate + GTP = N(6)-(1,2-dicarboxyethyl)-AMP + GDP + phosphate + 2 H(+). The protein operates within purine metabolism; AMP biosynthesis via de novo pathway; AMP from IMP: step 1/2. Functionally, plays an important role in the de novo pathway of purine nucleotide biosynthesis. Catalyzes the first committed step in the biosynthesis of AMP from IMP. The protein is Adenylosuccinate synthetase of Borrelia duttonii (strain Ly).